Reading from the N-terminus, the 251-residue chain is Ubiquinone/menaquinone biosynthesis C-methyltransferase UbiE (251 aa).

S-adenosyl-L-methionine contacts are provided by residues Thr74, Asp95, 123 to 124 (NA), and Ser140.

The protein belongs to the class I-like SAM-binding methyltransferase superfamily. MenG/UbiE family.

It catalyses the reaction a 2-demethylmenaquinol + S-adenosyl-L-methionine = a menaquinol + S-adenosyl-L-homocysteine + H(+). It carries out the reaction a 2-methoxy-6-(all-trans-polyprenyl)benzene-1,4-diol + S-adenosyl-L-methionine = a 5-methoxy-2-methyl-3-(all-trans-polyprenyl)benzene-1,4-diol + S-adenosyl-L-homocysteine + H(+). Its pathway is quinol/quinone metabolism; menaquinone biosynthesis; menaquinol from 1,4-dihydroxy-2-naphthoate: step 2/2. The protein operates within cofactor biosynthesis; ubiquinone biosynthesis. Methyltransferase required for the conversion of demethylmenaquinol (DMKH2) to menaquinol (MKH2) and the conversion of 2-polyprenyl-6-methoxy-1,4-benzoquinol (DDMQH2) to 2-polyprenyl-3-methyl-6-methoxy-1,4-benzoquinol (DMQH2). The polypeptide is Ubiquinone/menaquinone biosynthesis C-methyltransferase UbiE (Cronobacter sakazakii (strain ATCC BAA-894) (Enterobacter sakazakii)).